A 463-amino-acid chain; its full sequence is Asparagine--tRNA ligase (463 aa).

This sequence belongs to the class-II aminoacyl-tRNA synthetase family. Homodimer.

The protein localises to the cytoplasm. It carries out the reaction tRNA(Asn) + L-asparagine + ATP = L-asparaginyl-tRNA(Asn) + AMP + diphosphate + H(+). The protein is Asparagine--tRNA ligase of Clostridium kluyveri (strain ATCC 8527 / DSM 555 / NBRC 12016 / NCIMB 10680 / K1).